The primary structure comprises 374 residues: uncharacterized protein (374 aa).

Residues 86–104 show a composition bias toward low complexity; that stretch reads RPAATAGTTPATGASGSAR. Positions 86 to 109 are disordered; it reads RPAATAGTTPATGASGSARPTDAA. Positions 179–354 constitute a Macro domain; the sequence is WWRRSNTTRG…LQRVVFAVHG (176 aa).

This is an uncharacterized protein from Mycobacterium tuberculosis (strain CDC 1551 / Oshkosh).